Consider the following 196-residue polypeptide: UMP-CMP kinase (196 aa).

13–18 contacts ATP; sequence GAGKGT. Ser33 is subject to Phosphoserine. An NMP region spans residues 33-63; that stretch reads SAGELLRDERKNPDSQYGELIEKYIKEGKIV. Arg39 serves as a coordination point for a ribonucleoside 5'-phosphate. Residues Lys43 and Lys55 each carry the N6-acetyllysine modification. Position 61–63 (61–63) interacts with a ribonucleoside 5'-phosphate; that stretch reads KIV. Residue Lys73 forms a Glycyl lysine isopeptide (Lys-Gly) (interchain with G-Cter in SUMO2) linkage. 93–96 is an a ribonucleoside 5'-phosphate binding site; that stretch reads GFPR. A CMP-binding site is contributed by Asn100. Lys106 bears the N6-succinyllysine mark. The LID stretch occupies residues 133 to 143; the sequence is ERGKSSGRSDD. Arg134 is a binding site for ATP. Residues Arg140 and Arg151 each coordinate a ribonucleoside 5'-phosphate. Lys179 is a binding site for ATP. A Phosphoserine modification is found at Ser180.

This sequence belongs to the adenylate kinase family. UMP-CMP kinase subfamily. Monomer. Requires Mg(2+) as cofactor.

The protein localises to the nucleus. Its subcellular location is the cytoplasm. The enzyme catalyses CMP + ATP = CDP + ADP. It carries out the reaction dCMP + ATP = dCDP + ADP. It catalyses the reaction UMP + ATP = UDP + ADP. The catalysed reaction is a 2'-deoxyribonucleoside 5'-diphosphate + ATP = a 2'-deoxyribonucleoside 5'-triphosphate + ADP. The enzyme catalyses a ribonucleoside 5'-diphosphate + ATP = a ribonucleoside 5'-triphosphate + ADP. Its function is as follows. Catalyzes the phosphorylation of pyrimidine nucleoside monophosphates at the expense of ATP. Plays an important role in de novo pyrimidine nucleotide biosynthesis. Has preference for UMP and CMP as phosphate acceptors. Also displays broad nucleoside diphosphate kinase activity. The protein is UMP-CMP kinase (Cmpk1) of Rattus norvegicus (Rat).